The chain runs to 784 residues: PWWP domain-containing protein 2A (784 aa).

Disordered stretches follow at residues 1–32 (MAAV…LGRL), 244–272 (KPVE…PEDV), 463–567 (AKEK…EMQD), and 605–654 (SSSA…SSKE). Basic and acidic residues predominate over residues 244–266 (KPVESIQEESKSFHEEPLVKSEE). Over residues 536–556 (TRYSATRSAGETPSEIQSPSN) the composition is skewed to polar residues. Positions 605–614 (SSSASVCSSD) are enriched in low complexity. In terms of domain architecture, PWWP spans 684 to 744 (VGDIVWAKIY…LSQLTPFLEN (61 aa)).

It localises to the nucleus. H2A.Z-specific chromatin binding protein which plays an important role in the neural crest cell differentiation and/or migration during early development and is essential for the development of the head and eye. Acts as an adapter between distinct nucleosome components (H3K36me3 or H2A.Z) and chromatin-modifying complexes, contributing to the regulation of the levels of histone acetylation at actively transcribed genes. This chain is PWWP domain-containing protein 2A (pwwp2a), found in Xenopus tropicalis (Western clawed frog).